Consider the following 416-residue polypeptide: MAADLIVGIQWGDEGKGKIVDLLAQEYNVVCRYQGGHNAGHTIVVDGKTIALHLIPSGILNPKAVNIIGNGVVVSPAALLKEMEQFDNLDGRLLISDKAHLIFKYHEEIDRAKERLRGKNAIGTTGRGIGPAYSDKVSRQGHRIGELKDIDTLHKKILDYFETNKIYFEALGISFPSENELRMELQRYQEVLMPYVVDTTNYLWDLLELGEAKILLEGAQGTMLDIDHGTYPYVTSSNTIAAGACTGLGLAPKDIGKVIGIAKAYCTRVGNGPFPTEDNGEDGERLRKQGHEFGTTTGRPRRCGWFDAVAAKYASRINGCDEMALMKLDVLDGFEKIKVASKYLYEGEEIDYMVSDLENVEPIYLEFEGWDRVEGIRSWKDLPLNAKRYIEAIEELIETKISLISTSPDRADTIKR.

GTP is bound by residues 12-18 (GDEGKGK) and 40-42 (GHT). The active-site Proton acceptor is the aspartate 13. Mg(2+) contacts are provided by aspartate 13 and glycine 40. IMP is bound by residues 13 to 16 (DEGK), 38 to 41 (NAGH), threonine 125, arginine 139, glutamine 220, threonine 235, and arginine 299. Catalysis depends on histidine 41, which acts as the Proton donor. Position 295-301 (295-301 (TTTGRPR)) interacts with substrate. GTP is bound by residues arginine 301, 327 to 329 (KLD), and 405 to 407 (STS).

Belongs to the adenylosuccinate synthetase family. Homodimer. The cofactor is Mg(2+).

It is found in the cytoplasm. It catalyses the reaction IMP + L-aspartate + GTP = N(6)-(1,2-dicarboxyethyl)-AMP + GDP + phosphate + 2 H(+). It participates in purine metabolism; AMP biosynthesis via de novo pathway; AMP from IMP: step 1/2. Functionally, plays an important role in the de novo pathway of purine nucleotide biosynthesis. Catalyzes the first committed step in the biosynthesis of AMP from IMP. This chain is Adenylosuccinate synthetase, found in Nitratiruptor sp. (strain SB155-2).